Consider the following 166-residue polypeptide: 2-amino-4-hydroxy-6-hydroxymethyldihydropteridine pyrophosphokinase (166 aa).

This sequence belongs to the HPPK family.

It catalyses the reaction 6-hydroxymethyl-7,8-dihydropterin + ATP = (7,8-dihydropterin-6-yl)methyl diphosphate + AMP + H(+). The protein operates within cofactor biosynthesis; tetrahydrofolate biosynthesis; 2-amino-4-hydroxy-6-hydroxymethyl-7,8-dihydropteridine diphosphate from 7,8-dihydroneopterin triphosphate: step 4/4. Catalyzes the transfer of pyrophosphate from adenosine triphosphate (ATP) to 6-hydroxymethyl-7,8-dihydropterin, an enzymatic step in folate biosynthesis pathway. The sequence is that of 2-amino-4-hydroxy-6-hydroxymethyldihydropteridine pyrophosphokinase (folK) from Streptococcus pyogenes serotype M1.